The primary structure comprises 361 residues: Tyrosine--tRNA ligase (361 aa).

The L-tyrosine site is built by Tyr-36, Tyr-162, Gln-166, Asp-169, and Gln-184. Positions Lys-236–Ser-240 match the 'KMSKS' region motif. Residue Lys-239 participates in ATP binding.

It belongs to the class-I aminoacyl-tRNA synthetase family. TyrS type 4 subfamily. As to quaternary structure, homodimer.

The protein localises to the cytoplasm. It carries out the reaction tRNA(Tyr) + L-tyrosine + ATP = L-tyrosyl-tRNA(Tyr) + AMP + diphosphate + H(+). Catalyzes the attachment of tyrosine to tRNA(Tyr) in a two-step reaction: tyrosine is first activated by ATP to form Tyr-AMP and then transferred to the acceptor end of tRNA(Tyr). This Saccharolobus islandicus (strain Y.N.15.51 / Yellowstone #2) (Sulfolobus islandicus) protein is Tyrosine--tRNA ligase.